The sequence spans 285 residues: Hydroxyacylglutathione hydrolase, mitochondrial (285 aa).

The transit peptide at 1-10 (MKFLLQQIRN) directs the protein to the mitochondrion. Zn(2+) contacts are provided by H69, H71, D73, H74, H131, D154, and H198.

It depends on Zn(2+) as a cofactor.

It localises to the mitochondrion matrix. It catalyses the reaction an S-(2-hydroxyacyl)glutathione + H2O = a 2-hydroxy carboxylate + glutathione + H(+). The enzyme catalyses (R)-S-lactoylglutathione + H2O = (R)-lactate + glutathione + H(+). The protein operates within secondary metabolite metabolism; methylglyoxal degradation; (R)-lactate from methylglyoxal: step 2/2. With respect to regulation, inhibited by various thiol compounds such as glutathione and coenzyme A. Functionally, thiolesterase that catalyzes the hydrolysis of S-D-lactoylglutathione to form glutathione and D-lactic acid. Involved in the metabolism of methylglyoxal, a toxic compound for yeast proliferation, by converting methylglyoxal to lactate via S-D-lactoylglutathione by sequential enzyme reactions catalyzed by glyoxalase I and glyoxalase II. The chain is Hydroxyacylglutathione hydrolase, mitochondrial from Saccharomyces cerevisiae (strain ATCC 204508 / S288c) (Baker's yeast).